Here is a 118-residue protein sequence, read N- to C-terminus: Na(+)/H(+) antiporter subunit G1 (118 aa).

Helical transmembrane passes span 9 to 29 (LAVI…IGII), 47 to 67 (LGAI…DGYI), and 69 to 89 (MQLI…SHLI).

It belongs to the CPA3 antiporters (TC 2.A.63) subunit G family. May form a heterooligomeric complex that consists of seven subunits: mnhA1, mnhB1, mnhC1, mnhD1, mnhE1, mnhF1 and mnhG1.

The protein resides in the cell membrane. Functionally, mnh complex is a Na(+)/H(+) antiporter involved in Na(+) excretion. The chain is Na(+)/H(+) antiporter subunit G1 (mnhG1) from Staphylococcus haemolyticus (strain JCSC1435).